Consider the following 466-residue polypeptide: tRNA-2-methylthio-N(6)-dimethylallyladenosine synthase (466 aa).

An MTTase N-terminal domain is found at 22 to 139 (RRYYVWTVGC…VVALAPNPIY (118 aa)). [4Fe-4S] cluster contacts are provided by Cys31, Cys67, Cys101, Cys166, Cys170, and Cys173. The Radical SAM core domain maps to 152–386 (SHPPVSVHVP…EQLQEQIATE (235 aa)). Residues 389–449 (ARFLGQTVEV…PWSLQGVPQL (61 aa)) enclose the TRAM domain.

It belongs to the methylthiotransferase family. MiaB subfamily. As to quaternary structure, monomer. Requires [4Fe-4S] cluster as cofactor.

The protein localises to the cytoplasm. The enzyme catalyses N(6)-dimethylallyladenosine(37) in tRNA + (sulfur carrier)-SH + AH2 + 2 S-adenosyl-L-methionine = 2-methylsulfanyl-N(6)-dimethylallyladenosine(37) in tRNA + (sulfur carrier)-H + 5'-deoxyadenosine + L-methionine + A + S-adenosyl-L-homocysteine + 2 H(+). Catalyzes the methylthiolation of N6-(dimethylallyl)adenosine (i(6)A), leading to the formation of 2-methylthio-N6-(dimethylallyl)adenosine (ms(2)i(6)A) at position 37 in tRNAs that read codons beginning with uridine. The sequence is that of tRNA-2-methylthio-N(6)-dimethylallyladenosine synthase from Chloroflexus aurantiacus (strain ATCC 29366 / DSM 635 / J-10-fl).